We begin with the raw amino-acid sequence, 552 residues long: Putative acetolactate synthase large subunit IlvB2 (552 aa).

Glu-48 is a thiamine diphosphate binding site. FAD contacts are provided by residues 262–285 (FGDG…VGVS) and 309–328 (DPDP…ITTS). The thiamine pyrophosphate binding stretch occupies residues 394–474 (TCISWTFRGI…VTWAVLNDGQ (81 aa)). Asp-445 provides a ligand contact to Mg(2+).

Belongs to the TPP enzyme family. As to quaternary structure, heterodimer of large catalytic subunit and small regulatory subunit. Requires Mg(2+) as cofactor. The cofactor is thiamine diphosphate.

The enzyme catalyses 2 pyruvate + H(+) = (2S)-2-acetolactate + CO2. It functions in the pathway amino-acid biosynthesis; L-isoleucine biosynthesis; L-isoleucine from 2-oxobutanoate: step 1/4. Its pathway is amino-acid biosynthesis; L-valine biosynthesis; L-valine from pyruvate: step 1/4. In terms of biological role, catalyzes the conversion of 2 pyruvate molecules into acetolactate in the first common step of the biosynthetic pathway of the branched-amino acids such as leucine, isoleucine, and valine. In Mycobacterium tuberculosis (strain ATCC 25618 / H37Rv), this protein is Putative acetolactate synthase large subunit IlvB2 (ilvB2).